An 89-amino-acid chain; its full sequence is Small ribosomal subunit protein uS15 (89 aa).

It belongs to the universal ribosomal protein uS15 family. Part of the 30S ribosomal subunit. Forms a bridge to the 50S subunit in the 70S ribosome, contacting the 23S rRNA.

One of the primary rRNA binding proteins, it binds directly to 16S rRNA where it helps nucleate assembly of the platform of the 30S subunit by binding and bridging several RNA helices of the 16S rRNA. In terms of biological role, forms an intersubunit bridge (bridge B4) with the 23S rRNA of the 50S subunit in the ribosome. The chain is Small ribosomal subunit protein uS15 from Streptococcus thermophilus (strain CNRZ 1066).